Reading from the N-terminus, the 328-residue chain is Probable nicotianamine synthase 6 (328 aa).

This sequence belongs to the nicotianamine synthase (NAS)-like family.

The enzyme catalyses 3 S-adenosyl-L-methionine = nicotianamine + 3 S-methyl-5'-thioadenosine + 3 H(+). In terms of biological role, synthesizes nicotianamine, a polyamine that is the first intermediate in the synthesis of the phytosiderophores of the mugineic acid type found in gramineae which serves as a sensor for the physiological iron status within the plant, and/or might be involved in the transport of iron. This is Probable nicotianamine synthase 6 (NAS6) from Hordeum vulgare (Barley).